Here is a 616-residue protein sequence, read N- to C-terminus: Dihydroxy-acid dehydratase (616 aa).

D81 contributes to the Mg(2+) binding site. C122 provides a ligand contact to [2Fe-2S] cluster. 2 residues coordinate Mg(2+): D123 and K124. K124 is modified (N6-carboxylysine). C195 contacts [2Fe-2S] cluster. Residue E491 participates in Mg(2+) binding. The active-site Proton acceptor is the S517.

It belongs to the IlvD/Edd family. Homodimer. [2Fe-2S] cluster is required as a cofactor. The cofactor is Mg(2+).

The catalysed reaction is (2R)-2,3-dihydroxy-3-methylbutanoate = 3-methyl-2-oxobutanoate + H2O. The enzyme catalyses (2R,3R)-2,3-dihydroxy-3-methylpentanoate = (S)-3-methyl-2-oxopentanoate + H2O. It functions in the pathway amino-acid biosynthesis; L-isoleucine biosynthesis; L-isoleucine from 2-oxobutanoate: step 3/4. Its pathway is amino-acid biosynthesis; L-valine biosynthesis; L-valine from pyruvate: step 3/4. Functions in the biosynthesis of branched-chain amino acids. Catalyzes the dehydration of (2R,3R)-2,3-dihydroxy-3-methylpentanoate (2,3-dihydroxy-3-methylvalerate) into 2-oxo-3-methylpentanoate (2-oxo-3-methylvalerate) and of (2R)-2,3-dihydroxy-3-methylbutanoate (2,3-dihydroxyisovalerate) into 2-oxo-3-methylbutanoate (2-oxoisovalerate), the penultimate precursor to L-isoleucine and L-valine, respectively. This is Dihydroxy-acid dehydratase from Salmonella paratyphi C (strain RKS4594).